Consider the following 463-residue polypeptide: ATP synthase subunit beta (463 aa).

152–159 serves as a coordination point for ATP; sequence GGAGVGKT.

Belongs to the ATPase alpha/beta chains family. As to quaternary structure, F-type ATPases have 2 components, CF(1) - the catalytic core - and CF(0) - the membrane proton channel. CF(1) has five subunits: alpha(3), beta(3), gamma(1), delta(1), epsilon(1). CF(0) has three main subunits: a(1), b(2) and c(9-12). The alpha and beta chains form an alternating ring which encloses part of the gamma chain. CF(1) is attached to CF(0) by a central stalk formed by the gamma and epsilon chains, while a peripheral stalk is formed by the delta and b chains.

It is found in the cell inner membrane. It carries out the reaction ATP + H2O + 4 H(+)(in) = ADP + phosphate + 5 H(+)(out). Produces ATP from ADP in the presence of a proton gradient across the membrane. The catalytic sites are hosted primarily by the beta subunits. In Shewanella sp. (strain MR-7), this protein is ATP synthase subunit beta.